A 519-amino-acid chain; its full sequence is MPFNGEKQCVGEDQPSDSDSSRFSESMASLSDYECSRQSFASDSSSKSSSPASTSPPRVVTFDEVMATARNLSNLTLAHEIAVNENFQLKQEALPEKSLAGRVKHIVHQAFWDVLDSELNADPPEFEHAIKLFEEIREILLSFLTPGGNRLRNQICEVLDTDLIRQQAEHSAVDIQGLANYVISTMGKLCAPVRDNDIRELKATGNIVEVLRQIFHVLDLMQMDMANFTIMSLRPHLQRQLVEYERTKFQEILEETPSALDQTTEWIKESVNEELFSLSESALTPGAENTSKPSLSPTLVLNNSYLKLLQWDYQKKELPETLMTDGARLQELTEKLNQLKIIACLSLITNNMVGAITGGLPELASRLTRISAVLLEGMNKETFNLKEVLNSIGIQTCVEVNKTLMERGLPTLNAEIQANLIGQFSSIEEEDNPIWSLIDKRIKLYMRRLLCLPSPQKCMPPMPGGLAVIQQELEALGSQYANIVNLNKQVYGPFYANILRKLLFNEEAMGKVDASPPTN.

Residues 1–30 (MPFNGEKQCVGEDQPSDSDSSRFSESMASL) form a disordered region. S16 is modified (phosphoserine). The segment covering 17 to 29 (DSDSSRFSESMAS) has biased composition (low complexity).

This sequence belongs to the TCP11 family. In terms of assembly, interacts with FMNL2; this interaction promotes muscle-derived satellite cell (MDSC) migration and differentiation.

The protein localises to the cytoplasm. Its subcellular location is the cytoskeleton. Its function is as follows. Promotes the migration of muscle-derived satellite cells (MDSCs) during differentiation throught interaction with FMNL2 and therefore may participate in microfilament assembly. The polypeptide is T-complex protein 11-like protein 2 (Homo sapiens (Human)).